The chain runs to 393 residues: Probable acetyl-CoA acyltransferase (393 aa).

The Acyl-thioester intermediate role is filled by C88. Residues H349 and C378 each act as proton acceptor in the active site.

This sequence belongs to the thiolase-like superfamily. Thiolase family.

It is found in the cytoplasm. It carries out the reaction 2 acetyl-CoA = acetoacetyl-CoA + CoA. The sequence is that of Probable acetyl-CoA acyltransferase from Staphylococcus aureus (strain bovine RF122 / ET3-1).